A 704-amino-acid chain; its full sequence is Transcription factor HNF-4 homolog (704 aa).

Residues 93–133 form a disordered region; it reads SAGGGSASSGSNNNNSMFSPNNNLSGSGSGTNSSQQQLQQQ. A compositionally biased stretch (low complexity) spans 100–133; sequence SSGSNNNNSMFSPNNNLSGSGSGTNSSQQQLQQQ. The nuclear receptor DNA-binding region spans 139-214; the sequence is PTVCAICGDR…AGMKKEAVQN (76 aa). NR C4-type zinc fingers lie at residues 142 to 162 and 178 to 197; these read CAIC…CDGC and CRFA…CRYC. Residues 232–470 form the NR LBD domain; the sequence is GNGLSVISLV…SLLQEMLLGG (239 aa). 3 disordered regions span residues 474–520, 563–624, and 684–704; these read DNPL…GSHS, PASV…QRMH, and PAGY…ETGY. Polar residues predominate over residues 487–512; the sequence is DYQSPTHTGNMEGGNQVNSSLDSLAT. Residues 563-574 are compositionally biased toward low complexity; sequence PASVAPASISPP. Positions 608–620 are enriched in polar residues; the sequence is GSRSGPLPTQHSP.

The protein belongs to the nuclear hormone receptor family. NR2 subfamily. Homodimer. In third instar larvae, expressed at high levels in midgut and attached gastric caeca, fat body, Malpighian tubules and oenocytes, and at lower levels in proventriculus, salivary glands, epidermis, brain and ring gland. Not detected in imaginal disks and the median neurosecretory cells that produce insulin-like peptides (at protein level). In developing embryos, expressed in mid-gut, fat bodies and the distal region of Malpighian tubules.

Its subcellular location is the nucleus. Its function is as follows. Transcriptionally controlled transcription factor. Important for the differentiation of various specialized cell types that arise from both endoderm and mesoderm. May have a role in early gut formation. Plays an essential role in lipid catabolism, regulating lipid mobilization and beta-oxidation in response to nutrient deprivation. This Drosophila melanogaster (Fruit fly) protein is Transcription factor HNF-4 homolog (Hnf4).